Here is a 943-residue protein sequence, read N- to C-terminus: Tyrosine-protein kinase transmembrane receptor ROR2 (943 aa).

A signal peptide spans 1 to 33 (MARGSALPRRPLLCIPAVWAAAALLLSVSRTSG). The Extracellular portion of the chain corresponds to 34-403 (EVEVLDPNDP…CSPRDSSKMG (370 aa)). Residues 55 to 145 (PTLKGYFLNF…VATNGMKTIT (91 aa)) enclose the Ig-like C2-type domain. The N-linked (GlcNAc...) asparagine glycan is linked to asparagine 70. Intrachain disulfides connect cysteine 83-cysteine 135, cysteine 174-cysteine 239, cysteine 182-cysteine 232, cysteine 223-cysteine 264, cysteine 252-cysteine 300, cysteine 256-cysteine 286, cysteine 316-cysteine 394, cysteine 337-cysteine 377, and cysteine 365-cysteine 389. One can recognise an FZ domain in the interval 169-303 (HEDGFCQPYR…SPDAANCMRI (135 aa)). Residue asparagine 188 is glycosylated (N-linked (GlcNAc...) asparagine). In terms of domain architecture, Kringle spans 316–394 (CYNGSGMDYR…RMELCDVPSC (79 aa)). Asparagine 318 carries N-linked (GlcNAc...) asparagine glycosylation. The helical transmembrane segment at 404 to 424 (ILYILVPSIAIPLVIACLFFL) threads the bilayer. Over 425–943 (VCMCRNKQKA…VDEAQVQLEA (519 aa)) the chain is Cytoplasmic. A sulfoserine; partial mark is found at serine 469 and serine 471. Residues 473–746 (VRFMEELGED…PRFKDIHSRL (274 aa)) form the Protein kinase domain. Residues 479-487 (LGEDRFGKV) and lysine 507 each bind ATP. Aspartate 615 serves as the catalytic Proton acceptor. Tyrosine 646 carries the post-translational modification Phosphotyrosine; by autocatalysis. Disordered stretches follow at residues 757-796 (SSAQ…APPF) and 850-931 (QVPP…DCDT). Composition is skewed to low complexity over residues 765 to 791 (SNTT…GPKQ) and 857 to 872 (PKPS…TSTG). Arginine 785 carries the post-translational modification Asymmetric dimethylarginine. Over residues 873-883 (YVTTAPSNTSM) the composition is skewed to polar residues.

It belongs to the protein kinase superfamily. Tyr protein kinase family. ROR subfamily. In terms of assembly, homodimer; promotes osteogenesis. Binds YWHAB. Interacts with WTIP. Interacts with ROR2. The cofactor is Mg(2+).

The protein localises to the cell membrane. It carries out the reaction L-tyrosyl-[protein] + ATP = O-phospho-L-tyrosyl-[protein] + ADP + H(+). Functionally, tyrosine-protein kinase receptor which may be involved in the early formation of the chondrocytes. It seems to be required for cartilage and growth plate development. Phosphorylates YWHAB, leading to induction of osteogenesis and bone formation. In contrast, has also been shown to have very little tyrosine kinase activity in vitro. May act as a receptor for wnt ligand WNT5A which may result in the inhibition of WNT3A-mediated signaling. This is Tyrosine-protein kinase transmembrane receptor ROR2 (ROR2) from Homo sapiens (Human).